Consider the following 340-residue polypeptide: Protein-tyrosine-phosphatase PTP1 (340 aa).

Positions 58–326 (IAHEFTGLQA…FFCYNAIVDE (269 aa)) constitute a Tyrosine-protein phosphatase domain. Residues aspartate 234, 265-271 (CSAGIGR), and glutamine 311 contribute to the substrate site. The Phosphocysteine intermediate role is filled by cysteine 265.

As to quaternary structure, interacts with MPK6. Interacts with KIN10. Post-translationally, phosphorylated by KIN10. As to expression, expressed in roots, stems and flowers, and at low levels in leaves.

It is found in the cytoplasm. It localises to the cytosol. Its subcellular location is the nucleus. The catalysed reaction is O-phospho-L-tyrosyl-[protein] + H2O = L-tyrosyl-[protein] + phosphate. Its activity is regulated as follows. Inhibited by hydrogen peroxide. In terms of biological role, protein-tyrosine-phosphatase that dephosphorylates and probably inhibits MPK6 in non-oxidative stress conditions. In association with MKP1, represses salicylic acid (SA) and camalexin biosynthesis, thus modulating defense response. May also repress MPK3. Dephosphorylates and inactivates MPK4 in vitro. This Arabidopsis thaliana (Mouse-ear cress) protein is Protein-tyrosine-phosphatase PTP1 (PTP1).